The following is a 451-amino-acid chain: Ribulose bisphosphate carboxylase large chain (451 aa).

K5 bears the N6,N6,N6-trimethyllysine mark. Substrate contacts are provided by N114 and T164. Catalysis depends on K166, which acts as the Proton acceptor. K168 contributes to the substrate binding site. Residues K192, D194, and E195 each coordinate Mg(2+). K192 is subject to N6-carboxylysine. H285 serves as the catalytic Proton acceptor. Residues R286, H318, and S370 each contribute to the substrate site.

The protein belongs to the RuBisCO large chain family. Type I subfamily. As to quaternary structure, heterohexadecamer of 8 large chains and 8 small chains; disulfide-linked. The disulfide link is formed within the large subunit homodimers. The cofactor is Mg(2+). Post-translationally, the disulfide bond which can form in the large chain dimeric partners within the hexadecamer appears to be associated with oxidative stress and protein turnover.

The protein resides in the plastid. Its subcellular location is the chloroplast. The enzyme catalyses 2 (2R)-3-phosphoglycerate + 2 H(+) = D-ribulose 1,5-bisphosphate + CO2 + H2O. It catalyses the reaction D-ribulose 1,5-bisphosphate + O2 = 2-phosphoglycolate + (2R)-3-phosphoglycerate + 2 H(+). In terms of biological role, ruBisCO catalyzes two reactions: the carboxylation of D-ribulose 1,5-bisphosphate, the primary event in carbon dioxide fixation, as well as the oxidative fragmentation of the pentose substrate in the photorespiration process. Both reactions occur simultaneously and in competition at the same active site. This Aristea glauca protein is Ribulose bisphosphate carboxylase large chain.